The primary structure comprises 86 residues: Cell division topological specificity factor (86 aa).

This sequence belongs to the MinE family.

In terms of biological role, prevents the cell division inhibition by proteins MinC and MinD at internal division sites while permitting inhibition at polar sites. This ensures cell division at the proper site by restricting the formation of a division septum at the midpoint of the long axis of the cell. The sequence is that of Cell division topological specificity factor from Rhizobium etli (strain ATCC 51251 / DSM 11541 / JCM 21823 / NBRC 15573 / CFN 42).